The primary structure comprises 105 residues: MSYKIRSNDLVIVLTGKDKGKVGIVKKIYRSNNTVIVEGINIVKKHQKSIPEKQQSGGIISKELPIHISNVSIFNKKLKKSDKVEFFWHLGKKKRRFKSNKELIQ.

This sequence belongs to the universal ribosomal protein uL24 family. In terms of assembly, part of the 50S ribosomal subunit.

Functionally, one of two assembly initiator proteins, it binds directly to the 5'-end of the 23S rRNA, where it nucleates assembly of the 50S subunit. One of the proteins that surrounds the polypeptide exit tunnel on the outside of the subunit. The polypeptide is Large ribosomal subunit protein uL24 (Buchnera aphidicola subsp. Cinara cedri (strain Cc)).